A 92-amino-acid chain; its full sequence is UPF0250 protein VP0718 (92 aa).

It belongs to the UPF0250 family.

The polypeptide is UPF0250 protein VP0718 (Vibrio parahaemolyticus serotype O3:K6 (strain RIMD 2210633)).